A 440-amino-acid chain; its full sequence is Thymidine phosphorylase (440 aa).

Belongs to the thymidine/pyrimidine-nucleoside phosphorylase family. Homodimer.

The enzyme catalyses thymidine + phosphate = 2-deoxy-alpha-D-ribose 1-phosphate + thymine. The protein operates within pyrimidine metabolism; dTMP biosynthesis via salvage pathway; dTMP from thymine: step 1/2. Its function is as follows. The enzymes which catalyze the reversible phosphorolysis of pyrimidine nucleosides are involved in the degradation of these compounds and in their utilization as carbon and energy sources, or in the rescue of pyrimidine bases for nucleotide synthesis. The protein is Thymidine phosphorylase of Salmonella choleraesuis (strain SC-B67).